The primary structure comprises 456 residues: High mobility group B protein 6 (456 aa).

4 disordered regions span residues 1 to 42, 117 to 142, 238 to 258, and 349 to 389; these read MATN…KSAK, SSLTQAEQEKANKKKKKDCPETKRPS, AEQDNKKKNKKEKDPLKPKHP, and MLKK…YFLF. Residues 11-21 show a composition bias toward basic residues; it reads KKPRNSRKALK. The segment at residues 138-206 is a DNA-binding region (HMG box 1); it reads TKRPSSSYVL…AYLQVIAKEK (69 aa). Basic and acidic residues predominate over residues 240 to 254; sequence QDNKKKNKKEKDPLK. Residues 255 to 321 constitute a DNA-binding region (HMG box 2); it reads PKHPVSAFLV…TYLQAMEEYK (67 aa). Over residues 354–363 the composition is skewed to basic and acidic residues; that stretch reads EKTDNLIKKE. Residues 379 to 447 constitute a DNA-binding region (HMG box 3); sequence PKKPASSYFL…AYKKEVEAYN (69 aa).

The protein localises to the nucleus. In Arabidopsis thaliana (Mouse-ear cress), this protein is High mobility group B protein 6 (HMGB6).